Reading from the N-terminus, the 1042-residue chain is Probable serine/threonine protein kinase IRE4 (1042 aa).

Basic and acidic residues-rich tracts occupy residues 1–10 (MAEENRKDRG), 102–115 (EEIK…GKDE), and 314–327 (QRNE…RRDK). Disordered regions lie at residues 1-75 (MAEE…GTKL), 90-115 (PPKY…GKDE), and 297-327 (WGST…RRDK). Residues 402-421 (CRICEEEVPLFHLEPHSYIC) form a C2H2-type; atypical zinc finger. Residues 670-955 (FEIIKPISRG…AAEVKSHPFF (286 aa)) enclose the Protein kinase domain. ATP contacts are provided by residues 676–684 (ISRGAFGKV) and Lys699. Asp793 serves as the catalytic Proton acceptor. Residues 830–850 (ESDVSPRTNSHHFQKNQEEER) form a disordered region. Ser854 carries the phosphoserine modification. Positions 956-1042 (QGVDWENLAL…KLFFLLLCVF (87 aa)) constitute an AGC-kinase C-terminal domain.

Belongs to the protein kinase superfamily. AGC Ser/Thr protein kinase family.

The enzyme catalyses L-seryl-[protein] + ATP = O-phospho-L-seryl-[protein] + ADP + H(+). It carries out the reaction L-threonyl-[protein] + ATP = O-phospho-L-threonyl-[protein] + ADP + H(+). In Arabidopsis thaliana (Mouse-ear cress), this protein is Probable serine/threonine protein kinase IRE4.